Here is an 898-residue protein sequence, read N- to C-terminus: Phosphoenolpyruvate carboxylase (898 aa).

Active-site residues include histidine 138 and lysine 561.

The protein belongs to the PEPCase type 1 family. Mg(2+) is required as a cofactor.

The catalysed reaction is oxaloacetate + phosphate = phosphoenolpyruvate + hydrogencarbonate. In terms of biological role, forms oxaloacetate, a four-carbon dicarboxylic acid source for the tricarboxylic acid cycle. This chain is Phosphoenolpyruvate carboxylase, found in Streptococcus pneumoniae serotype 2 (strain D39 / NCTC 7466).